The chain runs to 279 residues: Diaminopimelate epimerase (279 aa).

2 residues coordinate substrate: Asn-11 and Asn-64. Catalysis depends on Cys-73, which acts as the Proton donor. Residues 74-75 (GN), Asn-170, and 187-188 (ER) contribute to the substrate site. Catalysis depends on Cys-196, which acts as the Proton acceptor. Residue 197 to 198 (GS) participates in substrate binding. Residues 255–279 (NTDHQRRRHSLSRSPSGRPRLQECR) form a disordered region.

This sequence belongs to the diaminopimelate epimerase family. In terms of assembly, homodimer.

The protein localises to the cytoplasm. The catalysed reaction is (2S,6S)-2,6-diaminopimelate = meso-2,6-diaminopimelate. The protein operates within amino-acid biosynthesis; L-lysine biosynthesis via DAP pathway; DL-2,6-diaminopimelate from LL-2,6-diaminopimelate: step 1/1. Functionally, catalyzes the stereoinversion of LL-2,6-diaminopimelate (L,L-DAP) to meso-diaminopimelate (meso-DAP), a precursor of L-lysine. In Methanopyrus kandleri (strain AV19 / DSM 6324 / JCM 9639 / NBRC 100938), this protein is Diaminopimelate epimerase.